Consider the following 791-residue polypeptide: AP-1 complex subunit gamma-like 2 (791 aa).

The GAE domain occupies 671–786 (APIPSVRVFE…QEIFEVDNLP (116 aa)).

It belongs to the adaptor complexes large subunit family. May interact with AP1S1/Sigma1A-adaptin and AP1S2/Sigma1B-adaptin. Probably does not interact with APB1. Interacts (via GAE domain) with RABEP1, NECAP1, CLINT1 and AFTPH/aftiphilin. Interacts with HBV major surface antigen L. Interacts with HBV core protein C in a ubiquitin-dependent manner. Binds ubiquitin. As to expression, widely expressed.

It localises to the golgi apparatus membrane. The protein localises to the cytoplasmic vesicle membrane. It is found in the endosome membrane. Its function is as follows. May function in protein sorting in late endosomes or multivesucular bodies (MVBs). Involved in MVB-assisted maturation of hepatitis B virus (HBV). The chain is AP-1 complex subunit gamma-like 2 (Ap1g2) from Mus musculus (Mouse).